We begin with the raw amino-acid sequence, 408 residues long: S-adenosylmethionine sensor upstream of mTORC1 (408 aa).

Low complexity predominate over residues 1 to 16 (MEAAPRSRPRPGGAAA). Residues 1-37 (MEAAPRSRPRPGGAAASPPPPPPPPPPEQERKLEQEK) form a disordered region. The segment covering 17-27 (SPPPPPPPPPP) has biased composition (pro residues). Over residues 28 to 37 (EQERKLEQEK) the composition is skewed to basic and acidic residues. 6 residues coordinate S-adenosyl-L-methionine: arginine 97, glycine 175, aspartate 193, aspartate 205, phenylalanine 206, and serine 247.

This sequence belongs to the BMT2/SAMTOR family. Interacts with the GATOR1 complex; interaction is disrupted when SAMTOR binds S-adenosyl-L-methionine. Interacts with the KICSTOR complex; interaction is disrupted when SAMTOR binds S-adenosyl-L-methionine.

Functionally, S-adenosyl-L-methionine-binding protein that acts as an inhibitor of mTORC1 signaling via interaction with the GATOR1 and KICSTOR complexes. Acts as a sensor of S-adenosyl-L-methionine to signal methionine sufficiency to mTORC1: in presence of methionine, binds S-adenosyl-L-methionine, leading to disrupt interaction with the GATOR1 and KICSTOR complexes and promote mTORC1 signaling. Upon methionine starvation, S-adenosyl-L-methionine levels are reduced, thereby promoting the association with GATOR1 and KICSTOR, leading to inhibit mTORC1 signaling. Probably also acts as a S-adenosyl-L-methionine-dependent methyltransferase. This is S-adenosylmethionine sensor upstream of mTORC1 from Gallus gallus (Chicken).